We begin with the raw amino-acid sequence, 457 residues long: MADS-box transcription factor 1 (457 aa).

An MADS-box domain is found at 11 to 71; it reads PSSPRRSIQR…NACHVYSSEE (61 aa). 2 disordered regions span residues 195–278 and 295–328; these read SGDY…SRLH and SSGY…LGQE. Residues 199–216 show a composition bias toward low complexity; sequence SDSPLEPSSSSSFSVPPE. Over residues 218 to 234 the composition is skewed to polar residues; sequence LNPTLSFQHNDVPQTDN. Residues 265 to 278 show a composition bias toward basic residues; it reads KNRRNGKPRISRLH. A compositionally biased stretch (polar residues) spans 295 to 317; that stretch reads SSGYLDPSSTPITPLDSAINQIT. Ser-372 carries the post-translational modification Phosphoserine.

Phosphorylated. Occurs periodically during mitosis.

It localises to the nucleus. Functionally, acts as a transcriptional activator with a role in the regulation of mitosis. Regulates septation and the periodic transcription of cdc15. The polypeptide is MADS-box transcription factor 1 (mbx1) (Schizosaccharomyces pombe (strain 972 / ATCC 24843) (Fission yeast)).